Reading from the N-terminus, the 65-residue chain is Potassium channel toxin alpha-KTx 12.6 (65 aa).

An N-terminal signal peptide occupies residues 1–22 (MKMKIFIITIVIALFITSIVEA). Intrachain disulfides connect Cys30-Cys51, Cys36-Cys56, and Cys40-Cys58.

It belongs to the short scorpion toxin superfamily. Potassium channel inhibitor family. Alpha-KTx 12 subfamily. As to expression, expressed by the venom gland.

It is found in the secreted. Inhibits voltage-gated potassium channels. This chain is Potassium channel toxin alpha-KTx 12.6, found in Lychas mucronatus (Chinese swimming scorpion).